The sequence spans 346 residues: tRNA N6-adenosine threonylcarbamoyltransferase (346 aa).

Residues His109, His113, and Tyr135 each coordinate Fe cation. Substrate is bound by residues 135–139 (YVSGG), Asp167, Gly180, Glu184, and Asn263. Asp291 is a Fe cation binding site.

The protein belongs to the KAE1 / TsaD family. As to quaternary structure, monomer. Component of the KEOPS complex that consists of Kae1, Bud32, Cgi121 and Pcc1; the whole complex dimerizes. The cofactor is Fe(2+).

The protein resides in the cytoplasm. It catalyses the reaction L-threonylcarbamoyladenylate + adenosine(37) in tRNA = N(6)-L-threonylcarbamoyladenosine(37) in tRNA + AMP + H(+). Its function is as follows. Required for the formation of a threonylcarbamoyl group on adenosine at position 37 (t(6)A37) in tRNAs that read codons beginning with adenine. Is a component of the KEOPS complex that is probably involved in the transfer of the threonylcarbamoyl moiety of threonylcarbamoyl-AMP (TC-AMP) to the N6 group of A37. Kae1 likely plays a direct catalytic role in this reaction, but requires other protein(s) of the complex to fulfill this activity. In Methanopyrus kandleri (strain AV19 / DSM 6324 / JCM 9639 / NBRC 100938), this protein is tRNA N6-adenosine threonylcarbamoyltransferase.